Reading from the N-terminus, the 343-residue chain is MKALAKLERGPGLTLTRVKKPEVGHNDVLIKIRRTAICGTDIHIWKWDDWAQKTIPVPMHVGHEYVGEIVEMGQEVRGFSIGDRVSGEGHITCGFCRNCRAGRRHLCRNTVGVGVNREGAFAEYLAIPAFNAFKIPPEISDDLAAIFDPFGNATHTALSFNLVGEDVLITGAGPIGVMAVAIAKHVGARNVVITDINDYRLELARKMGATRAVNVSRESLRDVMADLHMTEGFDVGLEMSGVPSAFTSLLESMNHGGKVALLGIPPAQTAIDWNQVIFKGLEIKGIYGREMFETWYKMVAMLQSGLDLSPIITHRFAVDDYEKGFAAMLSGESGKVILDWADA.

Residue Cys-38 participates in Zn(2+) binding. Active-site charge relay system residues include Thr-40 and His-43. Residues His-63, Glu-64, Cys-93, Cys-96, Cys-99, and Cys-107 each coordinate Zn(2+). Residues Ile-175, Asp-195, Arg-200, 262–264, and 286–287 contribute to the NAD(+) site; these read LGI and IY.

Belongs to the zinc-containing alcohol dehydrogenase family. As to quaternary structure, homotetramer. It depends on Zn(2+) as a cofactor.

It localises to the cytoplasm. It catalyses the reaction L-threonine + NAD(+) = (2S)-2-amino-3-oxobutanoate + NADH + H(+). It functions in the pathway amino-acid degradation; L-threonine degradation via oxydo-reductase pathway; glycine from L-threonine: step 1/2. Its function is as follows. Catalyzes the NAD(+)-dependent oxidation of L-threonine to 2-amino-3-ketobutyrate. The chain is L-threonine 3-dehydrogenase from Burkholderia mallei (strain NCTC 10247).